Here is a 57-residue protein sequence, read N- to C-terminus: Large ribosomal subunit protein bL32 (57 aa).

It belongs to the bacterial ribosomal protein bL32 family.

The sequence is that of Large ribosomal subunit protein bL32 from Bacillus licheniformis (strain ATCC 14580 / DSM 13 / JCM 2505 / CCUG 7422 / NBRC 12200 / NCIMB 9375 / NCTC 10341 / NRRL NRS-1264 / Gibson 46).